A 203-amino-acid polypeptide reads, in one-letter code: A-type ATP synthase subunit E (203 aa).

Belongs to the V-ATPase E subunit family. In terms of assembly, has multiple subunits with at least A(3), B(3), C, D, E, F, H, I and proteolipid K(x).

The protein localises to the cell membrane. Functionally, component of the A-type ATP synthase that produces ATP from ADP in the presence of a proton gradient across the membrane. The chain is A-type ATP synthase subunit E from Thermococcus sibiricus (strain DSM 12597 / MM 739).